We begin with the raw amino-acid sequence, 343 residues long: N-acetyl-gamma-glutamyl-phosphate reductase (343 aa).

Cys147 is a catalytic residue.

This sequence belongs to the NAGSA dehydrogenase family. Type 1 subfamily.

Its subcellular location is the cytoplasm. The enzyme catalyses N-acetyl-L-glutamate 5-semialdehyde + phosphate + NADP(+) = N-acetyl-L-glutamyl 5-phosphate + NADPH + H(+). Its pathway is amino-acid biosynthesis; L-arginine biosynthesis; N(2)-acetyl-L-ornithine from L-glutamate: step 3/4. Functionally, catalyzes the NADPH-dependent reduction of N-acetyl-5-glutamyl phosphate to yield N-acetyl-L-glutamate 5-semialdehyde. The sequence is that of N-acetyl-gamma-glutamyl-phosphate reductase from Listeria monocytogenes serotype 4b (strain CLIP80459).